The chain runs to 593 residues: Aspartate--tRNA(Asp/Asn) ligase (593 aa).

E176 contributes to the L-aspartate binding site. The aspartate stretch occupies residues 200–203 (QIFK). R222 provides a ligand contact to L-aspartate. ATP contacts are provided by residues 222-224 (RDE) and Q231. Residue H450 participates in L-aspartate binding. E490 is a binding site for ATP. R497 serves as a coordination point for L-aspartate. Position 542–545 (542–545 (GLDR)) interacts with ATP.

This sequence belongs to the class-II aminoacyl-tRNA synthetase family. Type 1 subfamily. Homodimer.

It localises to the cytoplasm. It catalyses the reaction tRNA(Asx) + L-aspartate + ATP = L-aspartyl-tRNA(Asx) + AMP + diphosphate. In terms of biological role, aspartyl-tRNA synthetase with relaxed tRNA specificity since it is able to aspartylate not only its cognate tRNA(Asp) but also tRNA(Asn). Reaction proceeds in two steps: L-aspartate is first activated by ATP to form Asp-AMP and then transferred to the acceptor end of tRNA(Asp/Asn). The chain is Aspartate--tRNA(Asp/Asn) ligase from Symbiobacterium thermophilum (strain DSM 24528 / JCM 14929 / IAM 14863 / T).